Reading from the N-terminus, the 852-residue chain is MEQSKRVSMMREKFEAQSNEAESSPPPNRKPPPPNKRVQTNGTSSLNSSGSSFVSPSPSPSPSPQQPVKRPLPSPGVNKQAPPALPTQPRPQQQQPEIPVRPTTPTRTPPNLINSNGTSGGSGFSSSSGNSGYSSSNNNNSNSNSSINMNGNHSNGLNGGSSNPVPMRKVSSPINIANGTTPPPPPQPTPSQQPQQSPSSASHNNTQHNIPSPPPLPNNKPKKLAPTAVPAGLGSIIGGPKTPAISPGSTSPSLGSSNGNIPISTTSTPITPTPPISVPLATSPNNSHKDSISNSNSNNNNNNNNNNNNNSSNATTSPPSPPVSNVGNKQDEEKKGFLSIFTNKKKNKDKKKEFSVGSPFNVKHNIHVNYHSVTGFEGLPKEWEVILQSSGITREDVVEHSEVVIDVLDFHMQQQQQQAQQEQQALMQKQMQQSGIPAHMLNNPKPPTIPIRDANKQPHNQLQPTPHQPPQHHHQQQPPQQHHHQQQQQQHNNNNNNNNNNNNNNNNQQSAQQQSAGILSQQQEQQLEEMMCGGAYDDEQYDLNNQPLPDETNVSLYDLVSQEDPTKLFGEGSTKIGEGAAGEVFVVTQLKTNNKVAIKKMPLNQQNMKLIVTEIGIMKSCRHQNIIDYIDSYLVGDSLWVAMEFMGGGCLTEILEQFNSVKLVEAQIAYVCAETLKGLAYIHSQHRIHRDIKSDNILLGSDGSVKLADFGYAAQLTKSKQKRVTIVGTPYWMAPELIRGQNYDRKVDIWSLGIMAMEMAESEPPYMSFPPLRALFLITTKGIPDLKDQNKWSDDFKDFVKKCLDKDVENRPEAKVLLNHPFLKTACNSNGLVPAIMEAKKAKEAHSKFSIH.

Residues 1-334 (MEQSKRVSMM…NVGNKQDEEK (334 aa)) form a disordered region. Ser-8 bears the Phosphoserine; by autocatalysis mark. Positions 24–35 (SPPPNRKPPPPN) are enriched in pro residues. Over residues 44-56 (SSLNSSGSSFVSP) the composition is skewed to low complexity. Residues 57 to 74 (SPSPSPSPQQPVKRPLPS) are compositionally biased toward pro residues. Low complexity-rich tracts occupy residues 90–117 (RPQQ…NSNG) and 124–163 (FSSS…GSSN). Over residues 181 to 191 (TPPPPPQPTPS) the composition is skewed to pro residues. The segment covering 201–210 (ASHNNTQHNI) has biased composition (polar residues). 2 stretches are compositionally biased toward low complexity: residues 246–270 (SPGS…STPI) and 293–317 (SNSN…ATTS). Positions 356-369 (VGSPFNVKHNIHVN) constitute a CRIB domain. Residues 419–433 (AQQEQQALMQKQMQQ) show a composition bias toward low complexity. Positions 419–526 (AQQEQQALMQ…GILSQQQEQQ (108 aa)) are disordered. Basic residues predominate over residues 470–485 (PQHHHQQQPPQQHHHQ). The span at 486–514 (QQQQQHNNNNNNNNNNNNNNNNQQSAQQQ) shows a compositional bias: low complexity. The Protein kinase domain maps to 570–823 (GEGSTKIGEG…AKVLLNHPFL (254 aa)). ATP is bound by residues 576-584 (IGEGAAGEV) and Lys-599. Asp-691 serves as the catalytic Proton acceptor.

The protein belongs to the protein kinase superfamily. STE Ser/Thr protein kinase family. STE20 subfamily. In terms of assembly, interacts with rac1A, rac1B, rac1C, racA, racB, racC and racF1. Requires Mg(2+) as cofactor. Autophosphorylated at Ser-8. This may stimulate interaction with GTP-bound Rac family members which then further stimulates autophosphorylation and kinase activity.

The protein resides in the membrane. Its subcellular location is the cytoplasm. It is found in the cytoskeleton. The catalysed reaction is L-seryl-[protein] + ATP = O-phospho-L-seryl-[protein] + ADP + H(+). It catalyses the reaction L-threonyl-[protein] + ATP = O-phospho-L-threonyl-[protein] + ADP + H(+). Its function is as follows. Regulator of the myosin I component of the cytoskeleton: required for regulation of cytokinesis, phagocytosis and pinocytosis. This Dictyostelium discoideum (Social amoeba) protein is Serine/threonine-protein kinase pakB.